Reading from the N-terminus, the 181-residue chain is Inner membrane-spanning protein YciB (181 aa).

Helical transmembrane passes span 24 to 44, 49 to 69, 81 to 101, 119 to 139, and 149 to 169; these read SATAVAIVATFAQIGWVWLRH, NMLWVSLAIIIVFGGATLILQ, LYWLFAVILFLAHSFFGKNLI, LNISWSVFFGAMGALNLYVAY, and FKLFGFMGLMFVFIILQALLL.

The protein belongs to the YciB family.

It localises to the cell inner membrane. Plays a role in cell envelope biogenesis, maintenance of cell envelope integrity and membrane homeostasis. In Nitrosomonas eutropha (strain DSM 101675 / C91 / Nm57), this protein is Inner membrane-spanning protein YciB.